The sequence spans 414 residues: Na(+)/H(+) antiporter NhaA (414 aa).

The next 11 membrane-spanning stretches (helical) occupy residues 22-42 (VGGFLLIGGALTALIWANSPF), 61-81 (LHLTVEAWVADGLLAIFFFVV), 101-121 (MLPIVAAVCGMAVPALIYAAF), 131-151 (GWGIPMATDIAFAVAILAVVG), 171-191 (LGAIIVIAVFYTASLSFLPLI), 215-235 (SAALPNWVVYLPLAGVIWALV), 239-259 (GVHATIAGVAMGLLMRTVPLA), 281-301 (VLPVFAVMSAGVVFAGGLGAV), 308-328 (LGIIAGLVVGKTVGIAGGSWV), 343-363 (WIDITGMALLAGIGFTVSLLI), and 379-399 (KAGVLLASLLATVLGAVVLAV).

It belongs to the NhaA Na(+)/H(+) (TC 2.A.33) antiporter family.

It localises to the cell membrane. The catalysed reaction is Na(+)(in) + 2 H(+)(out) = Na(+)(out) + 2 H(+)(in). In terms of biological role, na(+)/H(+) antiporter that extrudes sodium in exchange for external protons. The protein is Na(+)/H(+) antiporter NhaA of Thermobifida fusca (strain YX).